Reading from the N-terminus, the 154-residue chain is Protein X (154 aa).

The segment at 68 to 117 (PCALRFTSARRMETTVNTHMILPKVLHKRTLGLPAMSTIDLEAYFKDCLF) is mitochondrial targeting sequence.

Belongs to the orthohepadnavirus protein X family. As to quaternary structure, may form homodimer. May interact with host CEBPA, CFLAR, CREB1, DDB1, E4F1, HBXIP, HSPD1/HSP60, NFKBIA, POLR2E and SMAD4. Interacts with host SMC5-SMC6 complex and induces its degradation. Interacts with host TRPC4AP; leading to prevent ubiquitination of TRPC4AP. Interacts with host PLSCR1; this interaction promotes ubiquitination and degradation of HBx and impairs HBx-mediated cell proliferation. In terms of processing, a fraction may be phosphorylated in insect cells and HepG2 cells, a human hepatoblastoma cell line. Phosphorylated in vitro by host protein kinase C or mitogen-activated protein kinase. N-acetylated in insect cells.

The protein localises to the host cytoplasm. It localises to the host nucleus. Its subcellular location is the host mitochondrion. Multifunctional protein that plays a role in silencing host antiviral defenses and promoting viral transcription. Does not seem to be essential for HBV infection. May be directly involved in development of cirrhosis and liver cancer (hepatocellular carcinoma). Most of cytosolic activities involve modulation of cytosolic calcium. The effect on apoptosis is controversial depending on the cell types in which the studies have been conducted. May induce apoptosis by localizing in mitochondria and causing loss of mitochondrial membrane potential. May also modulate apoptosis by binding host CFLAR, a key regulator of the death-inducing signaling complex (DISC). Promotes viral transcription by using the host E3 ubiquitin ligase DDB1 to target the SMC5-SMC6 complex to proteasomal degradation. This host complex would otherwise bind to viral episomal DNA, and prevents its transcription. Moderately stimulates transcription of many different viral and cellular transcription elements. Promoters and enhancers stimulated by HBx contain DNA binding sites for NF-kappa-B, AP-1, AP-2, c-EBP, ATF/CREB, or the calcium-activated factor NF-AT. The sequence is that of Protein X from Hepatitis B virus genotype C subtype ayw (isolate Australia/AustRC/1992) (HBV-C).